A 396-amino-acid polypeptide reads, in one-letter code: L-lactate dehydrogenase (396 aa).

The FMN hydroxy acid dehydrogenase domain maps to 1–380; it reads MIISAASDYR…SGDSLVQELG (380 aa). Tyr-24 contacts substrate. Residues Ser-106 and Gln-127 each contribute to the FMN site. Substrate is bound at residue Tyr-129. FMN is bound at residue Thr-155. A substrate-binding site is contributed by Arg-164. An FMN-binding site is contributed by Lys-251. His-275 acts as the Proton acceptor in catalysis. Arg-278 lines the substrate pocket. Residue 306 to 330 coordinates FMN; sequence DSGIRNGLDVVRMIALGADTVLLGR.

The protein belongs to the FMN-dependent alpha-hydroxy acid dehydrogenase family. Requires FMN as cofactor.

It localises to the cell inner membrane. It carries out the reaction (S)-lactate + A = pyruvate + AH2. Functionally, catalyzes the conversion of L-lactate to pyruvate. Is coupled to the respiratory chain. The polypeptide is L-lactate dehydrogenase (Salmonella arizonae (strain ATCC BAA-731 / CDC346-86 / RSK2980)).